A 392-amino-acid polypeptide reads, in one-letter code: Putative RNA-binding protein Luc7-like 2 (392 aa).

Phosphoserine is present on serine 18. Positions glutamate 102–methionine 177 form a coiled coil. Residues lysine 235–lysine 257 show a composition bias toward basic and acidic residues. The tract at residues lysine 235 to isoleucine 392 is disordered. The segment covering leucine 258 to histidine 321 has biased composition (basic residues). Residues lysine 266 and lysine 269 each carry the 5-hydroxylysine; by JMJD6 modification. 2 stretches are compositionally biased toward basic and acidic residues: residues lysine 337–arginine 364 and arginine 377–isoleucine 392.

This sequence belongs to the Luc7 family. As to quaternary structure, interacts with SCNM1.

It localises to the nucleus speckle. It is found in the nucleus. Its subcellular location is the nucleoplasm. May bind to RNA via its Arg/Ser-rich domain. This chain is Putative RNA-binding protein Luc7-like 2 (LUC7L2), found in Homo sapiens (Human).